We begin with the raw amino-acid sequence, 228 residues long: Probable septum site-determining protein MinC (228 aa).

It belongs to the MinC family. As to quaternary structure, interacts with MinD and FtsZ.

Cell division inhibitor that blocks the formation of polar Z ring septums. Rapidly oscillates between the poles of the cell to destabilize FtsZ filaments that have formed before they mature into polar Z rings. Prevents FtsZ polymerization. This is Probable septum site-determining protein MinC from Yersinia pseudotuberculosis serotype O:1b (strain IP 31758).